The primary structure comprises 127 residues: Small ribosomal subunit protein bS6 (127 aa).

A disordered region spans residues 102–127; it reads IMQGAEKGKSSRKEKVDAEAEASEEA. The segment covering 107–119 has biased composition (basic and acidic residues); it reads EKGKSSRKEKVDA.

This sequence belongs to the bacterial ribosomal protein bS6 family.

Binds together with bS18 to 16S ribosomal RNA. This chain is Small ribosomal subunit protein bS6, found in Coxiella burnetii (strain CbuK_Q154) (Coxiella burnetii (strain Q154)).